The following is a 168-amino-acid chain: Small ribosomal subunit protein uS5 (168 aa).

One can recognise an S5 DRBM domain in the interval 17-80 (IEDQLVAVNR…EDGKKKMINV (64 aa)).

This sequence belongs to the universal ribosomal protein uS5 family. As to quaternary structure, part of the 30S ribosomal subunit. Contacts proteins S4 and S8.

In terms of biological role, with S4 and S12 plays an important role in translational accuracy. Functionally, located at the back of the 30S subunit body where it stabilizes the conformation of the head with respect to the body. In Lactobacillus helveticus (strain DPC 4571), this protein is Small ribosomal subunit protein uS5.